We begin with the raw amino-acid sequence, 949 residues long: RNA polymerase-associated protein RapA (949 aa).

A Helicase ATP-binding domain is found at 164–332 (EVADRIAPRV…FARLRLLDPN (169 aa)). Position 177–184 (177–184 (DEVGLGKT)) interacts with ATP. The short motif at 278–281 (DEAH) is the DEAH box element. Positions 474–628 (RVEWLIDQLK…TCPTGNALQH (155 aa)) constitute a Helicase C-terminal domain.

This sequence belongs to the SNF2/RAD54 helicase family. RapA subfamily. Interacts with the RNAP. Has a higher affinity for the core RNAP than for the holoenzyme. Its ATPase activity is stimulated by binding to RNAP.

In terms of biological role, transcription regulator that activates transcription by stimulating RNA polymerase (RNAP) recycling in case of stress conditions such as supercoiled DNA or high salt concentrations. Probably acts by releasing the RNAP, when it is trapped or immobilized on tightly supercoiled DNA. Does not activate transcription on linear DNA. Probably not involved in DNA repair. In Pseudomonas fluorescens (strain ATCC BAA-477 / NRRL B-23932 / Pf-5), this protein is RNA polymerase-associated protein RapA.